A 94-amino-acid chain; its full sequence is MSEILQDVQRKLVFPIDFPSQRKTEKFQQLSLMIGALVACILGFAQQSLKVLLTAYGISCVITLICVLPAYPWYNKQKLRWAQPKIEINVDQYD.

An N-acetylserine modification is found at serine 2. At 2 to 28 (SEILQDVQRKLVFPIDFPSQRKTEKFQ) the chain is on the cytoplasmic side. Residues 29 to 49 (QLSLMIGALVACILGFAQQSL) traverse the membrane as a helical segment. Lysine 50 is a topological domain (lumenal). Residues 51-71 (VLLTAYGISCVITLICVLPAY) form a helical membrane-spanning segment. Topologically, residues 72–94 (PWYNKQKLRWAQPKIEINVDQYD) are cytoplasmic.

This sequence belongs to the SPCS1 family. As to quaternary structure, component of the signal peptidase complex (SPC) composed of a catalytic subunit SEC11 and three accessory subunits SPC1, SPC2 and SPC3. The complex induces a local thinning of the ER membrane which is used to measure the length of the signal peptide (SP) h-region of protein substrates. This ensures the selectivity of the complex towards h-regions shorter than 18-20 amino acids. SPC associates with the translocon complex. Interacts with SBH1 and SEB2/SBH2.

The protein localises to the endoplasmic reticulum membrane. Component of the signal peptidase complex (SPC) which catalyzes the cleavage of N-terminal signal sequences from nascent proteins as they are translocated into the lumen of the endoplasmic reticulum. Dispensable for SPC enzymatic activity. The sequence is that of Signal peptidase complex subunit 1 (SPC1) from Saccharomyces cerevisiae (strain ATCC 204508 / S288c) (Baker's yeast).